The sequence spans 563 residues: Arginine--tRNA ligase (563 aa).

The short motif at Pro121 to His131 is the 'HIGH' region element.

It belongs to the class-I aminoacyl-tRNA synthetase family. As to quaternary structure, monomer.

The protein localises to the cytoplasm. The enzyme catalyses tRNA(Arg) + L-arginine + ATP = L-arginyl-tRNA(Arg) + AMP + diphosphate. The chain is Arginine--tRNA ligase from Streptococcus pneumoniae (strain ATCC BAA-255 / R6).